The chain runs to 195 residues: Glycerol-3-phosphate acyltransferase (195 aa).

6 consecutive transmembrane segments (helical) span residues 2 to 22 (IFFSILITIFAYFLGSISSAI), 54 to 74 (IAISVILFDILKGAIPMWLGY), 80 to 100 (PIFLGATAVFSCLGHMYPIFF), 107 to 127 (GVATAFGVLTTIDLHLSIVMI), 132 to 152 (LTVLSFGYSSLGAIVTAFIIP), and 155 to 175 (AWHFQSQYLLPTIIISSLVVI).

The protein belongs to the PlsY family. As to quaternary structure, probably interacts with PlsX.

The protein resides in the cell inner membrane. It carries out the reaction an acyl phosphate + sn-glycerol 3-phosphate = a 1-acyl-sn-glycero-3-phosphate + phosphate. It participates in lipid metabolism; phospholipid metabolism. Catalyzes the transfer of an acyl group from acyl-phosphate (acyl-PO(4)) to glycerol-3-phosphate (G3P) to form lysophosphatidic acid (LPA). This enzyme utilizes acyl-phosphate as fatty acyl donor, but not acyl-CoA or acyl-ACP. This chain is Glycerol-3-phosphate acyltransferase, found in Blochmanniella pennsylvanica (strain BPEN).